The primary structure comprises 200 residues: Thymidine kinase (200 aa).

ATP contacts are provided by residues serine 9–serine 16 and aspartate 88–histidine 91. Glutamate 89 functions as the Proton acceptor in the catalytic mechanism. 4 residues coordinate Zn(2+): cysteine 146, cysteine 148, cysteine 183, and histidine 186.

The protein belongs to the thymidine kinase family. Homotetramer.

The protein localises to the cytoplasm. The catalysed reaction is thymidine + ATP = dTMP + ADP + H(+). In Rhizobium etli (strain ATCC 51251 / DSM 11541 / JCM 21823 / NBRC 15573 / CFN 42), this protein is Thymidine kinase.